The primary structure comprises 345 residues: MNTTTRTFYLPRLEDTFSVFPDNGLNPHYAECRIQSQAWIDKYYKIVCGPKMRAYMDHCKFELITAYTYPYASSDGLRKTMDLANILWLYDEFTDTLSGKDATNAAAIVIRTLRERDFDDGSWICHMMRDFYAAHIEKFGPNVSRRFIDHFCQYVEGTGTEAKHREKDHVLDINAYIIMRRAASAVLTAFDLAEYCLGIDLPQYVHDDPAFISGYNAGLDLVFLDNDLFSYDMEQAKGHCTTNIITVVMKSKRIDLQSAFDFTAGYCESLTQQLIAAQISLASRTDPVFSNNAVKCLEAIANWVKGSDGWSFATERYFGKQNVIVKETRAVEMRKSFQDIAVLKE.

Positions 91, 226, 230, and 234 each coordinate Mg(2+). Positions 91–95 (DEFTD) match the DDXXD motif motif. (2E,6E)-farnesyl diphosphate is bound by residues R316 and Y317.

It belongs to the terpene synthase family. Requires Mg(2+) as cofactor.

The enzyme catalyses (2E,6E)-farnesyl diphosphate = beta-gurjunene + diphosphate. In terms of biological role, terpene cyclase that catalyzes the cyclization of farnesyl diphosphate (FPP) to beta-gurjunene. The sequence is that of Sesquiterpene synthase GALMADRAFT_104215 from Galerina marginata (strain CBS 339.88).